The following is a 298-amino-acid chain: Elongation factor Ts (298 aa).

The segment at 79-82 (TDFV) is involved in Mg(2+) ion dislocation from EF-Tu.

This sequence belongs to the EF-Ts family.

It is found in the cytoplasm. Functionally, associates with the EF-Tu.GDP complex and induces the exchange of GDP to GTP. It remains bound to the aminoacyl-tRNA.EF-Tu.GTP complex up to the GTP hydrolysis stage on the ribosome. The chain is Elongation factor Ts from Cereibacter sphaeroides (strain ATCC 17025 / ATH 2.4.3) (Rhodobacter sphaeroides).